The primary structure comprises 106 residues: Large ribosomal subunit protein uL24 (106 aa).

A compositionally biased stretch (basic and acidic residues) spans 84–97 (EKIGRELGAKEKAR). Residues 84–106 (EKIGRELGAKEKARLQKRKAAAK) form a disordered region.

This sequence belongs to the universal ribosomal protein uL24 family. As to quaternary structure, part of the 50S ribosomal subunit.

In terms of biological role, one of two assembly initiator proteins, it binds directly to the 5'-end of the 23S rRNA, where it nucleates assembly of the 50S subunit. Its function is as follows. One of the proteins that surrounds the polypeptide exit tunnel on the outside of the subunit. The chain is Large ribosomal subunit protein uL24 from Anaeromyxobacter dehalogenans (strain 2CP-C).